The chain runs to 166 residues: MMSGRTDEELKGVTLLGNQSVKYQYQYNPDILESFGNKHPENDYFVKLNFPEFTSLCPKTGQPDFAAIYISYVPDKLLVESKSLKLYLFSFRNQGDFHEDCINIIMKDLIRLMDPKYIEVWGKFTPRGGISIDPYCNHGKKGTKWETMAEKRIQWHDMNPENINNR.

Cys-57 serves as the catalytic Thioimide intermediate. Asp-64 acts as the Proton donor in catalysis. Residues 79 to 81 (VES) and 98 to 99 (HE) contribute to the substrate site.

The protein belongs to the GTP cyclohydrolase I family. QueF type 1 subfamily.

It is found in the cytoplasm. It carries out the reaction 7-aminomethyl-7-carbaguanine + 2 NADP(+) = 7-cyano-7-deazaguanine + 2 NADPH + 3 H(+). The protein operates within tRNA modification; tRNA-queuosine biosynthesis. Functionally, catalyzes the NADPH-dependent reduction of 7-cyano-7-deazaguanine (preQ0) to 7-aminomethyl-7-deazaguanine (preQ1). This chain is NADPH-dependent 7-cyano-7-deazaguanine reductase, found in Alkaliphilus metalliredigens (strain QYMF).